The primary structure comprises 446 residues: Ribosome biogenesis protein WDR12 homolog (446 aa).

The ubiquitin-like (UBL) domain stretch occupies residues 21–105 (VQITFFSKDK…ETILKIECII (85 aa)). WD repeat units follow at residues 171-211 (KCSG…LVEK) and 216-255 (GHERAVECVSVNSDATRAISGSVDTNLKVWNLDPSDEATI). The interval 256–275 (YEKEEEESSAKKKRKKDTRT) is disordered. WD repeat units follow at residues 284 to 324 (GHRD…EVSR), 326 to 365 (KGPKSFTSIDIHPTSNLLISSCTDAIPRLYDPKNRDGAMV), 371 to 412 (GHQN…SSLF), and 416 to 446 (GHEDRILCAAWNEGLIATGSADCSIKIFETS).

This sequence belongs to the WD repeat WDR12/YTM1 family.

The protein resides in the nucleus. Its subcellular location is the nucleolus. The protein localises to the nucleoplasm. In terms of biological role, required for maturation of ribosomal RNAs and formation of the large ribosomal subunit. The protein is Ribosome biogenesis protein WDR12 homolog of Caenorhabditis briggsae.